Reading from the N-terminus, the 419-residue chain is Transcription termination factor Rho (419 aa).

In terms of domain architecture, Rho RNA-BD spans 48-123 (DIFGDGVLEI…LKVNKVNYDK (76 aa)). RNA-binding stretches follow at residues 61–66 (GFGFLR), 78–80 (DIY), and 108–110 (ERY). Residues 169-174 (GRGQRG), 181-186 (KAGKTM), and Arg212 each bind ATP. The interval 284-288 (VLTGG) is RNA-binding 2.

The protein belongs to the Rho family. Homohexamer. The homohexamer assembles into an open ring structure.

Its function is as follows. Facilitates transcription termination by a mechanism that involves Rho binding to the nascent RNA, activation of Rho's RNA-dependent ATPase activity, and release of the mRNA from the DNA template. This chain is Transcription termination factor Rho, found in Buchnera aphidicola subsp. Baizongia pistaciae (strain Bp).